Here is a 360-residue protein sequence, read N- to C-terminus: 3-dehydroquinate synthase (360 aa).

NAD(+) contacts are provided by residues D72–K77, G106–D110, T130–T131, K143, and K152. 3 residues coordinate Zn(2+): E185, H248, and H265.

Belongs to the sugar phosphate cyclases superfamily. Dehydroquinate synthase family. Co(2+) is required as a cofactor. The cofactor is Zn(2+). It depends on NAD(+) as a cofactor.

The protein localises to the cytoplasm. It catalyses the reaction 7-phospho-2-dehydro-3-deoxy-D-arabino-heptonate = 3-dehydroquinate + phosphate. The protein operates within metabolic intermediate biosynthesis; chorismate biosynthesis; chorismate from D-erythrose 4-phosphate and phosphoenolpyruvate: step 2/7. In terms of biological role, catalyzes the conversion of 3-deoxy-D-arabino-heptulosonate 7-phosphate (DAHP) to dehydroquinate (DHQ). The sequence is that of 3-dehydroquinate synthase from Geotalea uraniireducens (strain Rf4) (Geobacter uraniireducens).